The chain runs to 453 residues: Bifunctional protein GlmU (453 aa).

The interval 1–226 (MKFSAVILAA…AIEVEGVNDR (226 aa)) is pyrophosphorylase. Residues 8–11 (LAAG), K22, Q73, 78–79 (GT), 100–102 (YGD), G137, E151, N166, and N224 each bind UDP-N-acetyl-alpha-D-glucosamine. D102 provides a ligand contact to Mg(2+). N224 contributes to the Mg(2+) binding site. The interval 227–247 (AQLARLERAFQSMQAQKLLEQ) is linker. The tract at residues 248 to 453 (GVMLRDPARF…TGWQRPVKQK (206 aa)) is N-acetyltransferase. 2 residues coordinate UDP-N-acetyl-alpha-D-glucosamine: R330 and K348. Catalysis depends on H360, which acts as the Proton acceptor. Residues Y363 and N374 each coordinate UDP-N-acetyl-alpha-D-glucosamine. Acetyl-CoA-binding positions include A377, 383-384 (NY), S402, A420, and R437.

The protein in the N-terminal section; belongs to the N-acetylglucosamine-1-phosphate uridyltransferase family. This sequence in the C-terminal section; belongs to the transferase hexapeptide repeat family. Homotrimer. Mg(2+) is required as a cofactor.

The protein resides in the cytoplasm. The catalysed reaction is alpha-D-glucosamine 1-phosphate + acetyl-CoA = N-acetyl-alpha-D-glucosamine 1-phosphate + CoA + H(+). It carries out the reaction N-acetyl-alpha-D-glucosamine 1-phosphate + UTP + H(+) = UDP-N-acetyl-alpha-D-glucosamine + diphosphate. It functions in the pathway nucleotide-sugar biosynthesis; UDP-N-acetyl-alpha-D-glucosamine biosynthesis; N-acetyl-alpha-D-glucosamine 1-phosphate from alpha-D-glucosamine 6-phosphate (route II): step 2/2. It participates in nucleotide-sugar biosynthesis; UDP-N-acetyl-alpha-D-glucosamine biosynthesis; UDP-N-acetyl-alpha-D-glucosamine from N-acetyl-alpha-D-glucosamine 1-phosphate: step 1/1. Its pathway is bacterial outer membrane biogenesis; LPS lipid A biosynthesis. Functionally, catalyzes the last two sequential reactions in the de novo biosynthetic pathway for UDP-N-acetylglucosamine (UDP-GlcNAc). The C-terminal domain catalyzes the transfer of acetyl group from acetyl coenzyme A to glucosamine-1-phosphate (GlcN-1-P) to produce N-acetylglucosamine-1-phosphate (GlcNAc-1-P), which is converted into UDP-GlcNAc by the transfer of uridine 5-monophosphate (from uridine 5-triphosphate), a reaction catalyzed by the N-terminal domain. In Vibrio parahaemolyticus serotype O3:K6 (strain RIMD 2210633), this protein is Bifunctional protein GlmU.